A 324-amino-acid polypeptide reads, in one-letter code: Acetyl-coenzyme A carboxylase carboxyl transferase subunit alpha (324 aa).

The CoA carboxyltransferase C-terminal domain occupies 44–297; it reads LEERAKQLRY…KAALLRNLAE (254 aa).

It belongs to the AccA family. As to quaternary structure, acetyl-CoA carboxylase is a heterohexamer composed of biotin carboxyl carrier protein (AccB), biotin carboxylase (AccC) and two subunits each of ACCase subunit alpha (AccA) and ACCase subunit beta (AccD).

The protein resides in the cytoplasm. It catalyses the reaction N(6)-carboxybiotinyl-L-lysyl-[protein] + acetyl-CoA = N(6)-biotinyl-L-lysyl-[protein] + malonyl-CoA. It participates in lipid metabolism; malonyl-CoA biosynthesis; malonyl-CoA from acetyl-CoA: step 1/1. Its function is as follows. Component of the acetyl coenzyme A carboxylase (ACC) complex. First, biotin carboxylase catalyzes the carboxylation of biotin on its carrier protein (BCCP) and then the CO(2) group is transferred by the carboxyltransferase to acetyl-CoA to form malonyl-CoA. This Thermosynechococcus vestitus (strain NIES-2133 / IAM M-273 / BP-1) protein is Acetyl-coenzyme A carboxylase carboxyl transferase subunit alpha.